A 98-amino-acid polypeptide reads, in one-letter code: Large ribosomal subunit protein bL21 (98 aa).

This sequence belongs to the bacterial ribosomal protein bL21 family. As to quaternary structure, part of the 50S ribosomal subunit. Contacts protein L20.

Functionally, this protein binds to 23S rRNA in the presence of protein L20. In Novosphingobium aromaticivorans (strain ATCC 700278 / DSM 12444 / CCUG 56034 / CIP 105152 / NBRC 16084 / F199), this protein is Large ribosomal subunit protein bL21.